A 351-amino-acid polypeptide reads, in one-letter code: Inhibin beta C chain (351 aa).

Positions 1–18 are cleaved as a signal peptide; the sequence is MASSLLLALLFLTLATVV. The propeptide occupies 19–236; it reads NLKTDGPCPA…EGKHRVRRRG (218 aa). N-linked (GlcNAc...) asparagine glycans are attached at residues asparagine 110, asparagine 142, and asparagine 160. 4 disulfides stabilise this stretch: cysteine 239/cysteine 247, cysteine 246/cysteine 316, cysteine 275/cysteine 348, and cysteine 279/cysteine 350.

It belongs to the TGF-beta family. Homodimeric or heterodimeric through association with alpha and beta subunits, linked by one or more disulfide bonds. Inhibins are heterodimers of one alpha and one beta subunit. Activins are homo- or heterodimers of beta subunits only.

It localises to the secreted. Its function is as follows. Inhibins and activins inhibit and activate, respectively, the secretion of follitropin by the pituitary gland. Inhibins/activins are involved in regulating a number of diverse functions such as hypothalamic and pituitary hormone secretion, gonadal hormone secretion, germ cell development and maturation, erythroid differentiation, insulin secretion, nerve cell survival, embryonic axial development or bone growth, depending on their subunit composition. Inhibins appear to oppose the functions of activins. This is Inhibin beta C chain (Inhbc) from Rattus norvegicus (Rat).